Reading from the N-terminus, the 360-residue chain is Protein Wnt-2 (360 aa).

An N-terminal signal peptide occupies residues 1-25 (MNAPLGGIWPWLPLLLTWLTPEVSS). 11 disulfides stabilise this stretch: Cys-76/Cys-87, Cys-127/Cys-135, Cys-137/Cys-157, Cys-206/Cys-220, Cys-208/Cys-215, Cys-278/Cys-309, Cys-294/Cys-304, Cys-308/Cys-348, Cys-324/Cys-339, Cys-326/Cys-336, and Cys-331/Cys-332. Ser-212 carries O-palmitoleoyl serine; by PORCN lipidation. The N-linked (GlcNAc...) asparagine glycan is linked to Asn-295.

The protein belongs to the Wnt family. Palmitoleoylation is required for efficient binding to frizzled receptors. Depalmitoleoylation leads to Wnt signaling pathway inhibition.

Its subcellular location is the secreted. It localises to the extracellular space. The protein localises to the extracellular matrix. In terms of biological role, ligand for members of the frizzled family of seven transmembrane receptors. Functions in the canonical Wnt signaling pathway that results in activation of transcription factors of the TCF/LEF family. Functions as a upstream regulator of FGF10 expression. Plays an important role in embryonic lung development. May contribute to embryonic brain development by regulating the proliferation of dopaminergic precursors and neurons. This is Protein Wnt-2 (WNT2) from Felis catus (Cat).